Here is a 491-residue protein sequence, read N- to C-terminus: Acetylcholine receptor subunit epsilon (491 aa).

Positions 1-20 (MAGALLCALLLLQLLGRGEG) are cleaved as a signal peptide. At 21 to 239 (KNEELRLYHY…VIYSLIIRRK (219 aa)) the chain is on the extracellular side. 2 N-linked (GlcNAc...) asparagine glycosylation sites follow: Asn86 and Asn161. A disulfide bridge links Cys148 with Cys162. Residues 240 to 264 (PLFYVINIIVPCVLISGLVLLAYFL) traverse the membrane as a helical segment. At 265 to 272 (PAQAGGQK) the chain is on the cytoplasmic side. The chain crosses the membrane as a helical span at residues 273–291 (CTVSINVLLAQTVFLFLIA). The Extracellular portion of the chain corresponds to 292–306 (QKTPETSLSVPLLGR). Residues 307–328 (YLIFVMVVATLIVMNCVIVLNV) form a helical membrane-spanning segment. The Cytoplasmic segment spans residues 329 to 456 (SLRTPTTHAM…WVRMGKALDS (128 aa)). The chain crosses the membrane as a helical span at residues 457 to 480 (ICFWAALVLFLVGSSLIFLGAYFN). Over 481–491 (RVPQLPYPPCM) the chain is Extracellular.

This sequence belongs to the ligand-gated ion channel (TC 1.A.9) family. Acetylcholine receptor (TC 1.A.9.1) subfamily. Epsilon/CHRNE sub-subfamily.

The protein localises to the postsynaptic cell membrane. It localises to the cell membrane. The enzyme catalyses K(+)(in) = K(+)(out). It carries out the reaction Na(+)(in) = Na(+)(out). Its function is as follows. After binding acetylcholine, the AChR responds by an extensive change in conformation that affects all subunits and leads to opening of an ion-conducting channel across the plasma membrane. The sequence is that of Acetylcholine receptor subunit epsilon (CHRNE) from Bos taurus (Bovine).